The following is a 201-amino-acid chain: Superoxide dismutase [Mn] (201 aa).

Mn(2+) is bound by residues His-27, His-81, Asp-163, and His-167.

Belongs to the iron/manganese superoxide dismutase family. Homodimer. Requires Mn(2+) as cofactor.

Its subcellular location is the secreted. The catalysed reaction is 2 superoxide + 2 H(+) = H2O2 + O2. Destroys superoxide anion radicals which are normally produced within the cells and which are toxic to biological systems. This Streptococcus pyogenes serotype M6 (strain ATCC BAA-946 / MGAS10394) protein is Superoxide dismutase [Mn] (sodA).